The primary structure comprises 282 residues: MINIGPPKKRRLRRKGNRFKKTRRVIPWRRLMIGALWGTMALASLGMVVAVACFAGQMLFASDYFKVERIQVENNRRIGREEILALSDICPGTNIFELDLERVSTRIEKNPWIASARVRRMFPDQLVIRVDERIPKAIVRLDFMYYLDASGHVFKRLEKGDRLDFPVISGVDRQALLEGNEATLSQIDKALRLLDRLDGRKIFAIDDVSELSLDDTTGITLYTCIGGVPVRMGHDDYNSKLNRLEKIFPQLKTRLGLIDYIDTNVTRRIIVKLDAGELRGKG.

Residues 1 to 30 (MINIGPPKKRRLRRKGNRFKKTRRVIPWRR) lie on the Cytoplasmic side of the membrane. Residues 31–51 (LMIGALWGTMALASLGMVVAV) traverse the membrane as a helical segment. Topologically, residues 52–282 (ACFAGQMLFA…LDAGELRGKG (231 aa)) are periplasmic. Positions 65–133 (FKVERIQVEN…DQLVIRVDER (69 aa)) constitute a POTRA domain.

The protein belongs to the FtsQ/DivIB family. FtsQ subfamily.

It localises to the cell inner membrane. In terms of biological role, essential cell division protein. This is Cell division protein FtsQ from Syntrophotalea carbinolica (strain DSM 2380 / NBRC 103641 / GraBd1) (Pelobacter carbinolicus).